Consider the following 170-residue polypeptide: Ubiquinone/menaquinone biosynthesis C-methyltransferase UbiE (170 aa).

The span at 1 to 12 (MNDQRKGDHAEP) shows a compositional bias: basic and acidic residues. The tract at residues 1 to 22 (MNDQRKGDHAEPTTHFGYQDVP) is disordered.

It belongs to the class I-like SAM-binding methyltransferase superfamily. MenG/UbiE family.

The catalysed reaction is a 2-demethylmenaquinol + S-adenosyl-L-methionine = a menaquinol + S-adenosyl-L-homocysteine + H(+). It catalyses the reaction a 2-methoxy-6-(all-trans-polyprenyl)benzene-1,4-diol + S-adenosyl-L-methionine = a 5-methoxy-2-methyl-3-(all-trans-polyprenyl)benzene-1,4-diol + S-adenosyl-L-homocysteine + H(+). It functions in the pathway quinol/quinone metabolism; menaquinone biosynthesis; menaquinol from 1,4-dihydroxy-2-naphthoate: step 2/2. It participates in cofactor biosynthesis; ubiquinone biosynthesis. Its function is as follows. Methyltransferase required for the conversion of demethylmenaquinol (DMKH2) to menaquinol (MKH2) and the conversion of 2-polyprenyl-6-methoxy-1,4-benzoquinol (DDMQH2) to 2-polyprenyl-3-methyl-6-methoxy-1,4-benzoquinol (DMQH2). The polypeptide is Ubiquinone/menaquinone biosynthesis C-methyltransferase UbiE (ubiE) (Ectopseudomonas oleovorans (Pseudomonas oleovorans)).